We begin with the raw amino-acid sequence, 483 residues long: Phloretin 2'-O-glucosyltransferase (483 aa).

The active-site Proton acceptor is H15. An an anthocyanidin-binding site is contributed by H15. D118 (charge relay) is an active-site residue. Residues T140, A360, Q362, H377, W380, N381, S382, and E385 each contribute to the UDP-alpha-D-glucose site. A400 is an an anthocyanidin binding site. UDP-alpha-D-glucose is bound by residues E401 and Q402.

This sequence belongs to the UDP-glycosyltransferase family.

The catalysed reaction is phloretin + UDP-alpha-D-glucose = phlorizin + UDP + H(+). Its function is as follows. Glycosyltransferase that possesses phloretin 2'-O-glycosyltransferase activity. Converts phloretin to phlorizin (phloretin 2'-O-glucoside), a potent antioxidant. Is specific for phloretin and does not possess glycosyltransferase activity toward caffeic acid, catechin, chlorogenic acid, 2-coumaric acid, 3-coumaric acid, 4-coumaric acid, cyanidin, 3,4-dihydroxyhydrocinnamic acid, epicatechin, 3-hydroxybenzoic acid, naringenin, 3,4-dihydroxybenzoic acid, quercetin and rutin. Can glycosylate phloretin in the presence of UDP-glucose, UDP-xylose and UDP-galactose. This is Phloretin 2'-O-glucosyltransferase from Malus domestica (Apple).